Reading from the N-terminus, the 336-residue chain is Ketol-acid reductoisomerase (NADP(+)) 1 (336 aa).

Residues 2–181 (AKVYYEKDVT…GATRAGVLET (180 aa)) form the KARI N-terminal Rossmann domain. NADP(+) is bound by residues 25 to 28 (YGSQ), Arg-48, Ser-52, and 82 to 85 (DELQ). Residue His-107 is part of the active site. Gly-133 contacts NADP(+). One can recognise a KARI C-terminal knotted domain in the interval 182–327 (TFKEETETDL…RKLREMMPFV (146 aa)). 4 residues coordinate Mg(2+): Asp-190, Glu-194, Glu-226, and Glu-230. Ser-251 contributes to the substrate binding site.

It belongs to the ketol-acid reductoisomerase family. Requires Mg(2+) as cofactor.

The enzyme catalyses (2R)-2,3-dihydroxy-3-methylbutanoate + NADP(+) = (2S)-2-acetolactate + NADPH + H(+). It carries out the reaction (2R,3R)-2,3-dihydroxy-3-methylpentanoate + NADP(+) = (S)-2-ethyl-2-hydroxy-3-oxobutanoate + NADPH + H(+). It functions in the pathway amino-acid biosynthesis; L-isoleucine biosynthesis; L-isoleucine from 2-oxobutanoate: step 2/4. The protein operates within amino-acid biosynthesis; L-valine biosynthesis; L-valine from pyruvate: step 2/4. In terms of biological role, involved in the biosynthesis of branched-chain amino acids (BCAA). Catalyzes an alkyl-migration followed by a ketol-acid reduction of (S)-2-acetolactate (S2AL) to yield (R)-2,3-dihydroxy-isovalerate. In the isomerase reaction, S2AL is rearranged via a Mg-dependent methyl migration to produce 3-hydroxy-3-methyl-2-ketobutyrate (HMKB). In the reductase reaction, this 2-ketoacid undergoes a metal-dependent reduction by NADPH to yield (R)-2,3-dihydroxy-isovalerate. The chain is Ketol-acid reductoisomerase (NADP(+)) 1 from Bacillus cereus (strain ATCC 10987 / NRS 248).